A 147-amino-acid polypeptide reads, in one-letter code: MTMHLNDLKPADGARTERTRVGRGIGSGLGKTCGRGHKGSFARKGGGKIKAGFEGGQTPMQRRLPKIGFRSKMARDSAEVLSYQLDKLEAGEIDFAALRAANLVPSRAKKAKIVLKGELSKKFVLKGVAATAGAKAAIEAAGGSVEE.

Over residues 1 to 20 (MTMHLNDLKPADGARTERTR) the composition is skewed to basic and acidic residues. The disordered stretch occupies residues 1-64 (MTMHLNDLKP…GGQTPMQRRL (64 aa)). A compositionally biased stretch (gly residues) spans 23–33 (RGIGSGLGKTC). Over residues 34–47 (GRGHKGSFARKGGG) the composition is skewed to basic residues.

Belongs to the universal ribosomal protein uL15 family. As to quaternary structure, part of the 50S ribosomal subunit.

Its function is as follows. Binds to the 23S rRNA. The sequence is that of Large ribosomal subunit protein uL15 from Xanthomonas campestris pv. campestris (strain 8004).